The chain runs to 378 residues: Erythronate-4-phosphate dehydrogenase (378 aa).

Ser45 and Thr66 together coordinate substrate. Residues Asp146 and Thr175 each contribute to the NAD(+) site. Arg208 is a catalytic residue. Asp232 contributes to the NAD(+) binding site. Residue Glu237 is part of the active site. His254 functions as the Proton donor in the catalytic mechanism. Gly257 contacts NAD(+). Tyr258 contacts substrate.

Belongs to the D-isomer specific 2-hydroxyacid dehydrogenase family. PdxB subfamily. As to quaternary structure, homodimer.

The protein resides in the cytoplasm. It carries out the reaction 4-phospho-D-erythronate + NAD(+) = (R)-3-hydroxy-2-oxo-4-phosphooxybutanoate + NADH + H(+). It participates in cofactor biosynthesis; pyridoxine 5'-phosphate biosynthesis; pyridoxine 5'-phosphate from D-erythrose 4-phosphate: step 2/5. Functionally, catalyzes the oxidation of erythronate-4-phosphate to 3-hydroxy-2-oxo-4-phosphonooxybutanoate. The polypeptide is Erythronate-4-phosphate dehydrogenase (Salmonella paratyphi A (strain ATCC 9150 / SARB42)).